Here is a 224-residue protein sequence, read N- to C-terminus: Triosephosphate isomerase (224 aa).

9–11 (NFK) lines the substrate pocket. Catalysis depends on His93, which acts as the Electrophile. The active-site Proton acceptor is Glu141. Residues Ile146, Gly181, and 202–203 (AS) contribute to the substrate site.

The protein belongs to the triosephosphate isomerase family. As to quaternary structure, homotetramer; dimer of dimers.

The protein localises to the cytoplasm. The catalysed reaction is D-glyceraldehyde 3-phosphate = dihydroxyacetone phosphate. Its pathway is carbohydrate biosynthesis; gluconeogenesis. The protein operates within carbohydrate degradation; glycolysis; D-glyceraldehyde 3-phosphate from glycerone phosphate: step 1/1. Its function is as follows. Involved in the gluconeogenesis. Catalyzes stereospecifically the conversion of dihydroxyacetone phosphate (DHAP) to D-glyceraldehyde-3-phosphate (G3P). The polypeptide is Triosephosphate isomerase (Pyrobaculum arsenaticum (strain DSM 13514 / JCM 11321 / PZ6)).